We begin with the raw amino-acid sequence, 469 residues long: Probable acetate kinase (469 aa).

Asn-30 is a binding site for Mg(2+). An ATP-binding site is contributed by Lys-37. Arg-122 contacts substrate. Asp-179 serves as the catalytic Proton donor/acceptor. 239–243 (HLGSG) is a binding site for ATP. Glu-453 lines the Mg(2+) pocket.

It belongs to the acetokinase family. Requires Mg(2+) as cofactor.

It carries out the reaction acetate + ATP = acetyl phosphate + ADP. It participates in metabolic intermediate biosynthesis; acetyl-CoA biosynthesis; acetyl-CoA from acetate: step 1/2. This Neurospora crassa (strain ATCC 24698 / 74-OR23-1A / CBS 708.71 / DSM 1257 / FGSC 987) protein is Probable acetate kinase.